Here is a 426-residue protein sequence, read N- to C-terminus: Chaperone SurA (426 aa).

An N-terminal signal peptide occupies residues 1–13 (MLGALFLGTAANA). PpiC domains are found at residues 164–265 (SEEL…KLLE) and 274–373 (RDEV…EVLG).

It localises to the periplasm. It carries out the reaction [protein]-peptidylproline (omega=180) = [protein]-peptidylproline (omega=0). Chaperone involved in the correct folding and assembly of outer membrane proteins. Recognizes specific patterns of aromatic residues and the orientation of their side chains, which are found more frequently in integral outer membrane proteins. May act in both early periplasmic and late outer membrane-associated steps of protein maturation. The polypeptide is Chaperone SurA (Pseudomonas fluorescens (strain Pf0-1)).